We begin with the raw amino-acid sequence, 248 residues long: MSLYREVDAFRVDDERRRVPEKVVNDIEVRIRINGGMEQRFTASPQALEEFATGYLLGEGLVDSVDDIVSIEISDNIIDAEIESGDLDIRRELVMGSDCFGGWRQRVEMVGPVDSDLRVRADDIFLAFKRMVKSAVVWRMTGGTHVAALVTGDEFRVFEDVSRHVAVDKVIGSGAMDGVNFRESFIVYSGRMPADMLIKVVRAGVPIIASNAAPTSSGYDAAQRTGLTMLGFVRGKRFNIYSHPERII.

Cysteine 99 functions as the Cysteine persulfide intermediate in the catalytic mechanism. Residue 232-237 (FVRGKR) participates in Mo-bis(molybdopterin guanine dinucleotide) binding.

This sequence belongs to the FdhD family.

The protein resides in the cytoplasm. In terms of biological role, required for formate dehydrogenase (FDH) activity. Acts as a sulfur carrier protein that transfers sulfur from IscS to the molybdenum cofactor prior to its insertion into FDH. The polypeptide is Sulfur carrier protein FdhD (Methanothermobacter thermautotrophicus (strain ATCC 29096 / DSM 1053 / JCM 10044 / NBRC 100330 / Delta H) (Methanobacterium thermoautotrophicum)).